A 383-amino-acid polypeptide reads, in one-letter code: Succinyl-diaminopimelate desuccinylase (383 aa).

His73 is a Zn(2+) binding site. Residue Asp75 is part of the active site. Asp107 lines the Zn(2+) pocket. The active-site Proton acceptor is the Glu141. The Zn(2+) site is built by Glu142, Glu170, and His356.

Belongs to the peptidase M20A family. DapE subfamily. As to quaternary structure, homodimer. Zn(2+) serves as cofactor. It depends on Co(2+) as a cofactor.

It catalyses the reaction N-succinyl-(2S,6S)-2,6-diaminopimelate + H2O = (2S,6S)-2,6-diaminopimelate + succinate. Its pathway is amino-acid biosynthesis; L-lysine biosynthesis via DAP pathway; LL-2,6-diaminopimelate from (S)-tetrahydrodipicolinate (succinylase route): step 3/3. Its function is as follows. Catalyzes the hydrolysis of N-succinyl-L,L-diaminopimelic acid (SDAP), forming succinate and LL-2,6-diaminopimelate (DAP), an intermediate involved in the bacterial biosynthesis of lysine and meso-diaminopimelic acid, an essential component of bacterial cell walls. The sequence is that of Succinyl-diaminopimelate desuccinylase from Pseudomonas fluorescens (strain ATCC BAA-477 / NRRL B-23932 / Pf-5).